Consider the following 311-residue polypeptide: Mitoferrin (311 aa).

Solcar repeat units follow at residues 15-102 (HSIP…MKSF), 111-195 (EHTL…WQQV), and 202-302 (YDPK…FKFM). The next 6 helical transmembrane spans lie at 17–36 (IPVHLAAGALAGAVEHCVMF), 77–96 (GVNAVAAGSMPAHALYFTVY), 112–132 (HTLAYGASGVVATLIHDAVMN), 170–189 (SYTTQLAMNVPFQAIHFMGY), 204–223 (PKSHLIAGGLAGGLAAAVTT), and 277–296 (GLQARVIFQVPATALSWSVY).

It belongs to the mitochondrial carrier (TC 2.A.29) family.

It is found in the mitochondrion inner membrane. Mitochondrial iron transporter that mediates iron uptake. Probably required for heme synthesis of hemoproteins and Fe-S cluster assembly. The polypeptide is Mitoferrin (Caenorhabditis briggsae).